Consider the following 172-residue polypeptide: Peptide methionine sulfoxide reductase MsrA (172 aa).

Cys-14 is a catalytic residue.

This sequence belongs to the MsrA Met sulfoxide reductase family.

The catalysed reaction is L-methionyl-[protein] + [thioredoxin]-disulfide + H2O = L-methionyl-(S)-S-oxide-[protein] + [thioredoxin]-dithiol. It carries out the reaction [thioredoxin]-disulfide + L-methionine + H2O = L-methionine (S)-S-oxide + [thioredoxin]-dithiol. In terms of biological role, has an important function as a repair enzyme for proteins that have been inactivated by oxidation. Catalyzes the reversible oxidation-reduction of methionine sulfoxide in proteins to methionine. This chain is Peptide methionine sulfoxide reductase MsrA, found in Streptomyces coelicolor (strain ATCC BAA-471 / A3(2) / M145).